Here is a 298-residue protein sequence, read N- to C-terminus: ADP/ATP translocase 2 (298 aa).

M1 is modified (N-acetylmethionine). Residues 1-7 (MTDAAVS) are Mitochondrial intermembrane-facing. T2 is modified (N-acetylthreonine; in ADP/ATP translocase 2, N-terminally processed). The Solcar 1 repeat unit spans residues 6–98 (VSFAKDFLAG…FAFKDKYKQI (93 aa)). Residue S7 is modified to Phosphoserine. A helical transmembrane segment spans residues 8–37 (FAKDFLAGGVAAAISKTAVAPIERVKLLLQ). Position 23 is an N6-malonyllysine (K23). The Mitochondrial matrix segment spans residues 38 to 74 (VQHASKQITADKQYKGIIDCVVRIPKEQGVLSFWRGN). K43 bears the N6-succinyllysine mark. N6,N6,N6-trimethyllysine; alternate is present on K52. An N6,N6-dimethyllysine; alternate modification is found at K52. An N6-methyllysine; alternate modification is found at K52. Residues 75-99 (LANVIRYFPTQALNFAFKDKYKQIF) form a helical membrane-spanning segment. Residues R80 and K92 each contribute to the ADP site. K92 and K96 each carry N6-malonyllysine. Topologically, residues 100-109 (LGGVDKRTQF) are mitochondrial intermembrane. N6-acetyllysine; alternate is present on K105. N6-succinyllysine; alternate is present on K105. Residues 110–130 (WRYFAGNLASGGAAGATSLCF) traverse the membrane as a helical segment. Solcar repeat units lie at residues 111–201 (RYFA…AKGM) and 212–297 (ISWM…IKKY). Residues 131 to 178 (VYPLDFARTRLAADVGKAGAEREFKGLGDCLVKIYKSDGIKGLYQGFN) lie on the Mitochondrial matrix side of the membrane. K147 carries the post-translational modification N6-methyllysine; alternate. N6-acetyllysine; alternate occurs at positions 147 and 155. K147 and K155 each carry N6-succinyllysine; alternate. K147 bears the N6-malonyllysine; alternate mark. An N6-acetyllysine mark is found at K163 and K166. Residues 179–199 (VSVQGIIIYRAAYFGIYDTAK) traverse the membrane as a helical segment. Residues 200 to 210 (GMLPDPKNTHI) lie on the Mitochondrial intermembrane side of the membrane. A helical transmembrane segment spans residues 211–231 (FISWMIAQSVTAVAGLTSYPF). At 232 to 273 (DTVRRRMMMQSGRKGTDIMYTGTLDCWRKIARDEGGKAFFKG) the chain is on the mitochondrial matrix side. Residue R235 participates in ADP binding. An important for transport activity region spans residues 235 to 240 (RRRMMM). Positions 235-240 (RRRMMM) match the Nucleotide carrier signature motif motif. The residue at position 268 (K268) is an N6-acetyllysine; alternate. K268 is modified (N6-succinyllysine; alternate). Residues 274–291 (AWSNVLRGMGGAFVLVLY) traverse the membrane as a helical segment. At 292–298 (DEIKKYT) the chain is on the mitochondrial intermembrane side.

It belongs to the mitochondrial carrier (TC 2.A.29) family. Monomer. Component of the MMXD complex, which includes CIAO1, ERCC2, CIAO2B, MMS19 and SLC25A5/ANT2. Interacts with AK4. Interacts with TIMM44; leading to inhibit the presequence translocase TIMM23, thereby promoting stabilization of PINK1. In terms of processing, trimethylated by ANTKMT at Lys-52. Present in kidney, brain, heart, liver and skeletal muscle.

It is found in the mitochondrion inner membrane. The protein localises to the membrane. The catalysed reaction is ADP(in) + ATP(out) = ADP(out) + ATP(in). It catalyses the reaction H(+)(in) = H(+)(out). Its activity is regulated as follows. The matrix-open state (m-state) is inhibited by the membrane-permeable bongkrekic acid (BKA). The cytoplasmic-open state (c-state) is inhibited by the membrane-impermeable toxic inhibitor carboxyatractyloside (CATR). Proton transporter activity is inhibited by ADP:ATP antiporter activity. ADP:ATP antiporter that mediates import of ADP into the mitochondrial matrix for ATP synthesis, and export of ATP out to fuel the cell. Cycles between the cytoplasmic-open state (c-state) and the matrix-open state (m-state): operates by the alternating access mechanism with a single substrate-binding site intermittently exposed to either the cytosolic (c-state) or matrix (m-state) side of the inner mitochondrial membrane. In addition to its ADP:ATP antiporter activity, also involved in mitochondrial uncoupling and mitochondrial permeability transition pore (mPTP) activity. Plays a role in mitochondrial uncoupling by acting as a proton transporter: proton transport uncouples the proton flows via the electron transport chain and ATP synthase to reduce the efficiency of ATP production and cause mitochondrial thermogenesis. Proton transporter activity is inhibited by ADP:ATP antiporter activity, suggesting that SLC25A5/ANT2 acts as a master regulator of mitochondrial energy output by maintaining a delicate balance between ATP production (ADP:ATP antiporter activity) and thermogenesis (proton transporter activity). Proton transporter activity requires free fatty acids as cofactor, but does not transport it. Probably mediates mitochondrial uncoupling in tissues that do not express UCP1. Also plays a key role in mPTP opening, a non-specific pore that enables free passage of the mitochondrial membranes to solutes of up to 1.5 kDa, and which contributes to cell death. It is however unclear if SLC25A5/ANT2 constitutes a pore-forming component of mPTP or regulates it. Acts as a regulator of mitophagy independently of ADP:ATP antiporter activity: promotes mitophagy via interaction with TIMM44, leading to inhibit the presequence translocase TIMM23, thereby promoting stabilization of PINK1. As part of the mitotic spindle-associated MMXD complex it may play a role in chromosome segregation. The sequence is that of ADP/ATP translocase 2 from Rattus norvegicus (Rat).